A 324-amino-acid polypeptide reads, in one-letter code: MRVTVLGAGAFGTALSVALYNSCCSVALWSRNKRVLEELRNTGMNSLYLPGCLVPKEIELIPDVESALKCASVLLLCVPTQELRNLCNDVRNTAALDASVPVLVCSKGIENKSLKFAGEVIEELLPDNPVFVLSGPALAKEMVRGLPCAMVLAGRDESLAASLAEKLSSAVMSIAPSTDYVGVQIGSVLKNIIAIACGIVIGKGLGYNASAMVVVRGIAEIQAVSTAKSESVDLSTIIGLACLGDLVLTCTSASSRNMSFGLAIGKGQDIASRNDSLVEGAESAQSIDRLSNTLGIHLPVCSAIAKLLRGELDTDQVINQLLFA.

Residues phenylalanine 11, arginine 31, and lysine 107 each coordinate NADPH. Sn-glycerol 3-phosphate-binding residues include lysine 107 and glycine 135. Residue alanine 139 coordinates NADPH. Positions 190, 245, 255, 256, and 257 each coordinate sn-glycerol 3-phosphate. Lysine 190 (proton acceptor) is an active-site residue. Arginine 256 contributes to the NADPH binding site. Residues valine 278 and glutamate 279 each coordinate NADPH.

It belongs to the NAD-dependent glycerol-3-phosphate dehydrogenase family.

The protein localises to the cytoplasm. It catalyses the reaction sn-glycerol 3-phosphate + NAD(+) = dihydroxyacetone phosphate + NADH + H(+). The catalysed reaction is sn-glycerol 3-phosphate + NADP(+) = dihydroxyacetone phosphate + NADPH + H(+). The protein operates within membrane lipid metabolism; glycerophospholipid metabolism. Its function is as follows. Catalyzes the reduction of the glycolytic intermediate dihydroxyacetone phosphate (DHAP) to sn-glycerol 3-phosphate (G3P), the key precursor for phospholipid synthesis. This chain is Glycerol-3-phosphate dehydrogenase [NAD(P)+], found in Anaplasma phagocytophilum (strain HZ).